A 180-amino-acid polypeptide reads, in one-letter code: Cancer/testis antigen 1 (180 aa).

Gly residues-rich tracts occupy residues 1 to 47 and 55 to 66; these read MQAE…GPRG and GPGGGAPRGPHG. The interval 1 to 66 is disordered; sequence MQAEGRGTGG…GGGAPRGPHG (66 aa).

The protein belongs to the CTAG/PCC1 family. Expressed in testis and ovary and in a wide variety of cancers. Detected in uterine myometrium. Expressed from 18 weeks until birth in human fetal testis. In the adult testis, is strongly expressed in spermatogonia and in primary spermatocytes, but not in post-meiotic cells or in testicular somatic cells (at protein level).

The protein resides in the cytoplasm. The sequence is that of Cancer/testis antigen 1 (CTAG1A) from Homo sapiens (Human).